Here is a 146-residue protein sequence, read N- to C-terminus: Lysozyme C-2 (146 aa).

An N-terminal signal peptide occupies residues 1 to 18 (MKTLLVLALLLLSVSVQA). The 128-residue stretch at 19 to 146 (KVYDRCEFAR…VSQYIRGCKL (128 aa)) folds into the C-type lysozyme domain. 4 disulfides stabilise this stretch: C24-C144, C48-C132, C81-C97, and C93-C111. Active-site residues include E53 and D69.

Belongs to the glycosyl hydrolase 22 family. In terms of assembly, monomer.

The protein localises to the secreted. The enzyme catalyses Hydrolysis of (1-&gt;4)-beta-linkages between N-acetylmuramic acid and N-acetyl-D-glucosamine residues in a peptidoglycan and between N-acetyl-D-glucosamine residues in chitodextrins.. Functionally, lysozymes have primarily a bacteriolytic function; those in tissues and body fluids are associated with the monocyte-macrophage system and enhance the activity of immunoagents. The sequence is that of Lysozyme C-2 from Sus scrofa (Pig).